Reading from the N-terminus, the 396-residue chain is Cathepsin E (396 aa).

A signal peptide spans 1 to 19 (MKTLLLLLLVLLELGEAQG). Residues 20-53 (SLHRVPLRRHPSLKKKLRARSQLSEFWKSHNLDM) constitute a propeptide, activation peptide. The Peptidase A1 domain maps to 78–396 (YFGTISIGSP…NRVGLAPAVP (319 aa)). The N-linked (GlcNAc...) asparagine glycan is linked to Asn-90. Residue Asp-96 is part of the active site. 2 disulfide bridges follow: Cys-109–Cys-114 and Cys-272–Cys-276. Asp-281 is a catalytic residue. Cys-314 and Cys-351 form a disulfide bridge.

This sequence belongs to the peptidase A1 family. In terms of assembly, homodimer; disulfide-linked. Glycosylated. The nature of the carbohydrate chain varies between cell types. In fibroblasts, the proenzyme contains a high mannose-type oligosaccharide, while the mature enzyme contains a complex-type oligosaccharide. In erythrocyte membranes, both the proenzyme and mature enzyme contain a complex-type oligosaccharide. In terms of processing, two forms are produced by autocatalytic cleavage, form I begins at Ile-54, form II begins at Thr-57. Expressed abundantly in the stomach, the Clara cells of the lung and activated B-lymphocytes, and at lower levels in lymph nodes, skin and spleen. Not expressed in resting B-lymphocytes.

The protein localises to the endosome. The enzyme catalyses Similar to cathepsin D, but slightly broader specificity.. Functionally, may have a role in immune function. Probably involved in the processing of antigenic peptides during MHC class II-mediated antigen presentation. May play a role in activation-induced lymphocyte depletion in the thymus, and in neuronal degeneration and glial cell activation in the brain. The polypeptide is Cathepsin E (CTSE) (Homo sapiens (Human)).